The primary structure comprises 496 residues: Cytochrome f, chloroplastic (496 aa).

A chloroplast-targeting transit peptide spans 1-149; it reads MASLQTPVMV…VGAAAGSANA (149 aa). Y150, C170, C173, and H174 together coordinate heme. A helical transmembrane segment spans residues 462-481; the sequence is VQAFLFFSFTVLATQTLLVV.

This sequence belongs to the cytochrome f family. Interacts with plastocyanin and Rieske iron-sulfur protein. The cofactor is heme.

Its subcellular location is the plastid. The protein localises to the chloroplast thylakoid membrane. Its function is as follows. Translocates protons across the thylakoid membrane and transfers electrons from photosystem II to photosystem I. It receives electrons from the Rieske iron-sulfur protein and passes them to plastocyanin. In Euglena gracilis, this protein is Cytochrome f, chloroplastic (petA).